We begin with the raw amino-acid sequence, 258 residues long: 5'-nucleotidase SurE (258 aa).

The a divalent metal cation site is built by Asp14, Asp15, Ser45, and Asn101.

This sequence belongs to the SurE nucleotidase family. A divalent metal cation serves as cofactor.

It localises to the cytoplasm. The catalysed reaction is a ribonucleoside 5'-phosphate + H2O = a ribonucleoside + phosphate. Its function is as follows. Nucleotidase that shows phosphatase activity on nucleoside 5'-monophosphates. This Chlorobium limicola (strain DSM 245 / NBRC 103803 / 6330) protein is 5'-nucleotidase SurE.